The primary structure comprises 270 residues: BPI fold-containing family A member 1 (270 aa).

The N-terminal stretch at 1 to 19 (MFLVGSLVVLCGLLAQSTA) is a signal peptide. The important for surfactant activity and antibacterial properties stretch occupies residues 104–109 (LVGGLL). The N-linked (GlcNAc...) asparagine glycan is linked to N174. Cysteines 196 and 238 form a disulfide.

Belongs to the BPI/LBP/Plunc superfamily. Plunc family. In terms of assembly, monomer. Interacts (via N-terminus) with SCNN1B, a subunit of the heterotrimeric epithelial sodium channel (ENaC); this inhibits proteolytic activation of ENaC. In terms of tissue distribution, detected in adult nasal epithelium, heart, lung, spleen, testis and salivary gland, and in embryonic nasal epithelium, lung, salivary gland and thymus.

The protein resides in the secreted. In terms of biological role, lipid-binding protein which shows high specificity for the surfactant phospholipid dipalmitoylphosphatidylcholine (DPPC). Plays a role in the innate immune responses of the upper airways. Reduces the surface tension in secretions from airway epithelia and inhibits the formation of biofilm by pathogenic Gram-negative bacteria, such as P.aeruginosa and K.pneumoniae. Negatively regulates proteolytic cleavage of SCNN1G, an event that is required for activation of the epithelial sodium channel (ENaC), and thereby contributes to airway surface liquid homeostasis and proper clearance of mucus. Plays a role in the airway inflammatory response after exposure to irritants. May attract macrophages and neutrophils. The polypeptide is BPI fold-containing family A member 1 (Bpifa1) (Rattus norvegicus (Rat)).